A 171-amino-acid chain; its full sequence is NADH-quinone oxidoreductase subunit I 1 (171 aa).

2 4Fe-4S ferredoxin-type domains span residues 39 to 71 (IVLTRDPDGQERCVACNLCAVVCPVGCIDLTKA) and 81 to 110 (EHFRINFARCIFCGFCEEACPTSAIQLTPD). Residues Cys-51, Cys-54, Cys-57, Cys-61, Cys-90, Cys-93, Cys-96, and Cys-100 each coordinate [4Fe-4S] cluster.

Belongs to the complex I 23 kDa subunit family. In terms of assembly, NDH-1 is composed of 14 different subunits. Subunits NuoA, H, J, K, L, M, N constitute the membrane sector of the complex. The cofactor is [4Fe-4S] cluster.

It localises to the cell inner membrane. It catalyses the reaction a quinone + NADH + 5 H(+)(in) = a quinol + NAD(+) + 4 H(+)(out). Functionally, NDH-1 shuttles electrons from NADH, via FMN and iron-sulfur (Fe-S) centers, to quinones in the respiratory chain. The immediate electron acceptor for the enzyme in this species is believed to be ubiquinone. Couples the redox reaction to proton translocation (for every two electrons transferred, four hydrogen ions are translocated across the cytoplasmic membrane), and thus conserves the redox energy in a proton gradient. The protein is NADH-quinone oxidoreductase subunit I 1 of Rhodopseudomonas palustris (strain BisB5).